Reading from the N-terminus, the 337-residue chain is Heat-inducible transcription repressor HrcA (337 aa).

Belongs to the HrcA family.

Its function is as follows. Negative regulator of class I heat shock genes (grpE-dnaK-dnaJ and groELS operons). Prevents heat-shock induction of these operons. The protein is Heat-inducible transcription repressor HrcA of Kocuria rhizophila (strain ATCC 9341 / DSM 348 / NBRC 103217 / DC2201).